The chain runs to 181 residues: Adenine phosphoribosyltransferase (181 aa).

This sequence belongs to the purine/pyrimidine phosphoribosyltransferase family. In terms of assembly, homodimer.

The protein resides in the cytoplasm. The enzyme catalyses AMP + diphosphate = 5-phospho-alpha-D-ribose 1-diphosphate + adenine. The protein operates within purine metabolism; AMP biosynthesis via salvage pathway; AMP from adenine: step 1/1. Functionally, catalyzes a salvage reaction resulting in the formation of AMP, that is energically less costly than de novo synthesis. This is Adenine phosphoribosyltransferase from Pseudoalteromonas translucida (strain TAC 125).